A 251-amino-acid chain; its full sequence is 2,3-bisphosphoglycerate-dependent phosphoglycerate mutase (251 aa).

Substrate-binding positions include Arg-11–Asn-18, Thr-24–Gly-25, Arg-63, Glu-90–Tyr-93, Lys-101, Arg-117–Arg-118, and Gly-184–Asn-185. The active-site Tele-phosphohistidine intermediate is His-12. Glu-90 acts as the Proton donor/acceptor in catalysis.

This sequence belongs to the phosphoglycerate mutase family. BPG-dependent PGAM subfamily.

It carries out the reaction (2R)-2-phosphoglycerate = (2R)-3-phosphoglycerate. Its pathway is carbohydrate degradation; glycolysis; pyruvate from D-glyceraldehyde 3-phosphate: step 3/5. In terms of biological role, catalyzes the interconversion of 2-phosphoglycerate and 3-phosphoglycerate. This is 2,3-bisphosphoglycerate-dependent phosphoglycerate mutase from Mycobacterium ulcerans (strain Agy99).